Consider the following 306-residue polypeptide: Pantothenate kinase (306 aa).

90–97 (GSVAVGKS) is an ATP binding site.

The protein belongs to the prokaryotic pantothenate kinase family.

The protein localises to the cytoplasm. It catalyses the reaction (R)-pantothenate + ATP = (R)-4'-phosphopantothenate + ADP + H(+). It functions in the pathway cofactor biosynthesis; coenzyme A biosynthesis; CoA from (R)-pantothenate: step 1/5. This is Pantothenate kinase from Lactococcus lactis subsp. cremoris (strain MG1363).